The primary structure comprises 624 residues: Phosphomethylpyrimidine synthase (624 aa).

The disordered stretch occupies residues 48–70 (SDTHTSQGREKNPPLTVYDTSGP). Substrate-binding positions include asparagine 229, methionine 258, tyrosine 287, histidine 323, 343–345 (SRG), 384–387 (DGLR), and glutamate 423. Histidine 427 lines the Zn(2+) pocket. Position 450 (tyrosine 450) interacts with substrate. Histidine 491 provides a ligand contact to Zn(2+). Positions 571, 574, and 579 each coordinate [4Fe-4S] cluster.

The protein belongs to the ThiC family. In terms of assembly, homodimer. [4Fe-4S] cluster is required as a cofactor.

It carries out the reaction 5-amino-1-(5-phospho-beta-D-ribosyl)imidazole + S-adenosyl-L-methionine = 4-amino-2-methyl-5-(phosphooxymethyl)pyrimidine + CO + 5'-deoxyadenosine + formate + L-methionine + 3 H(+). The protein operates within cofactor biosynthesis; thiamine diphosphate biosynthesis. Catalyzes the synthesis of the hydroxymethylpyrimidine phosphate (HMP-P) moiety of thiamine from aminoimidazole ribotide (AIR) in a radical S-adenosyl-L-methionine (SAM)-dependent reaction. This is Phosphomethylpyrimidine synthase from Nitrosococcus oceani (strain ATCC 19707 / BCRC 17464 / JCM 30415 / NCIMB 11848 / C-107).